The sequence spans 279 residues: Movement protein (279 aa).

The protein belongs to the cucumovirus movement protein family.

It is found in the host cell junction. The protein resides in the host plasmodesma. Functionally, transports viral genome to neighboring plant cells directly through plasmosdesmata, without any budding. The movement protein allows efficient cell to cell propagation, by bypassing the host cell wall barrier. Acts by forming a tubular structure at the host plasmodesmata, enlarging it enough to allow free passage of virion capsids. This is Movement protein from Cucumber mosaic virus (strain As) (CMV).